A 94-amino-acid chain; its full sequence is MEVVLIFVYSLLVPVVLASAAKEKEIDPFHYNYQTLRIGGLVFDVVLFLVPSCHLLSHRCKCSFNQKPQDPGDKEAQVENFITANAKEPQKAKN.

The signal sequence occupies residues 1 to 18; the sequence is MEVVLIFVYSLLVPVVLA. Residues 19–34 lie on the Extracellular side of the membrane; the sequence is SAAKEKEIDPFHYNYQ. The chain crosses the membrane as a helical span at residues 35–58; the sequence is TLRIGGLVFDVVLFLVPSCHLLSH. The Cytoplasmic portion of the chain corresponds to 59–94; sequence RCKCSFNQKPQDPGDKEAQVENFITANAKEPQKAKN. The segment at 66 to 94 is disordered; that stretch reads QKPQDPGDKEAQVENFITANAKEPQKAKN.

The protein belongs to the FXYD family.

The protein localises to the membrane. The protein is Putative FXYD domain-containing ion transport regulator 8 (FXYD6P3) of Homo sapiens (Human).